Reading from the N-terminus, the 284-residue chain is MGQPWAAGSTDGAPAQLPLVLTALWAAAVGLELAYVLVLGPGPPPLGPLARALQLALAAFQLLNLLGNVGLFLRSDPSIRGVMLAGRGLGQGWAYCYQCQSQVPPRSGHCSACRVCILRRDHHCRLLGRCVGFGNYRPFLCLLLHAAGVLLHVSVLLGPALSALLRAHTPLHMAALLLLPWLMLLTGRVSLAQFALAFVTDTCVAGALLCGAGLLFHGMLLLRGQTTWEWARGQHSYDLGPCHNLQAALGPRWALVWLWPFLASPLPGDGITFQTTADVGHTAS.

The Cytoplasmic portion of the chain corresponds to 1–18; the sequence is MGQPWAAGSTDGAPAQLP. A helical transmembrane segment spans residues 19-39; sequence LVLTALWAAAVGLELAYVLVL. Topologically, residues 40–52 are extracellular; the sequence is GPGPPPLGPLARA. A helical transmembrane segment spans residues 53-73; that stretch reads LQLALAAFQLLNLLGNVGLFL. Residues 74-137 are Cytoplasmic-facing; that stretch reads RSDPSIRGVM…GRCVGFGNYR (64 aa). One can recognise a DHHC domain in the interval 94-144; that stretch reads AYCYQCQSQVPPRSGHCSACRVCILRRDHHCRLLGRCVGFGNYRPFLCLLL. The active-site S-palmitoyl cysteine intermediate is the C124. A helical membrane pass occupies residues 138 to 158; it reads PFLCLLLHAAGVLLHVSVLLG. The Extracellular segment spans residues 159 to 166; that stretch reads PALSALLR. A helical membrane pass occupies residues 167–187; the sequence is AHTPLHMAALLLLPWLMLLTG. Residues 188–201 lie on the Cytoplasmic side of the membrane; that stretch reads RVSLAQFALAFVTD. Residues 202 to 222 traverse the membrane as a helical segment; sequence TCVAGALLCGAGLLFHGMLLL. Residues 223–284 are Extracellular-facing; it reads RGQTTWEWAR…TTADVGHTAS (62 aa).

The protein belongs to the DHHC palmitoyltransferase family.

The protein resides in the membrane. The catalysed reaction is L-cysteinyl-[protein] + hexadecanoyl-CoA = S-hexadecanoyl-L-cysteinyl-[protein] + CoA. Probable palmitoyltransferase that could catalyze the addition of palmitate onto various protein substrates. The polypeptide is Probable palmitoyltransferase ZDHHC24 (Homo sapiens (Human)).